A 360-amino-acid polypeptide reads, in one-letter code: MKASILEKLEHLAERFTEVGALMGDPDVISNQDKFRDLGREYAELEPVIKCYNEYNTVLGNIAEAKVLISDSDPDMRAMGQDELKENEAALEPLELELQKLLLPKDPNDGKNVFLEIRAGTGGDEAAIFSGDLFRMYSRYAESKGWKVEIISENQGEHGGYKEIITRVVGQGVYSELKFESGAHRVQRVPETESQGRIHTSACTVAVMPEADEMAEVNINKADLRIDTFRASGAGGQHVNKTDSAIRLTHIPTGVVVECQDERSQHKNRAKAMSLLASRLSMAQEEKAAAEQASARKSLVGSGDRSERIRTYNFPQGRVTDHRINLTLYKLDEVMQGALGDVIQPLVNEYQADQLAALSE.

The residue at position 237 (Gln-237) is an N5-methylglutamine.

Belongs to the prokaryotic/mitochondrial release factor family. Methylated by PrmC. Methylation increases the termination efficiency of RF1.

It localises to the cytoplasm. Functionally, peptide chain release factor 1 directs the termination of translation in response to the peptide chain termination codons UAG and UAA. The polypeptide is Peptide chain release factor 1 (Saccharophagus degradans (strain 2-40 / ATCC 43961 / DSM 17024)).